Reading from the N-terminus, the 308-residue chain is Oxygen-dependent coproporphyrinogen-III oxidase (308 aa).

S100 provides a ligand contact to substrate. Residues H104 and H114 each coordinate a divalent metal cation. H114 serves as the catalytic Proton donor. 116 to 118 (NFR) is a substrate binding site. Residues H153 and H183 each coordinate a divalent metal cation. An important for dimerization region spans residues 248–283 (YVEFNLVFDRGTIFGLQSGGRTESILSSMPPMATWK). 266 to 268 (GGR) contributes to the substrate binding site.

Belongs to the aerobic coproporphyrinogen-III oxidase family. Homodimer. A divalent metal cation is required as a cofactor.

Its subcellular location is the cytoplasm. It carries out the reaction coproporphyrinogen III + O2 + 2 H(+) = protoporphyrinogen IX + 2 CO2 + 2 H2O. Its pathway is porphyrin-containing compound metabolism; protoporphyrin-IX biosynthesis; protoporphyrinogen-IX from coproporphyrinogen-III (O2 route): step 1/1. Functionally, involved in the heme biosynthesis. Catalyzes the aerobic oxidative decarboxylation of propionate groups of rings A and B of coproporphyrinogen-III to yield the vinyl groups in protoporphyrinogen-IX. The protein is Oxygen-dependent coproporphyrinogen-III oxidase of Francisella tularensis subsp. holarctica (strain OSU18).